An 863-amino-acid polypeptide reads, in one-letter code: Ribosomal protein S6 kinase alpha-5 (863 aa).

The segment covering 1–21 (MEGEGGGSGGAGTSGDSGDGG) has biased composition (gly residues). The interval 1 to 22 (MEGEGGGSGGAGTSGDSGDGGE) is disordered. One can recognise a Protein kinase 1 domain in the interval 48 to 317 (FELLKVLGTG…AEEIKEHLFF (270 aa)). Residues 54–62 (LGTGAYGKV) and K80 each bind ATP. The active-site Proton acceptor is the D176. S211 carries the phosphoserine; by autocatalysis modification. The AGC-kinase C-terminal domain occupies 318–386 (EKIKWDDLAA…VAPSILFKRN (69 aa)). At S359 the chain carries Phosphoserine; by MAPK1, MAPK3 and MAPK14. 2 positions are modified to phosphoserine; by autocatalysis: S375 and S380. Residues 428–675 (DKPLGEGSFS…SCDLWSLGVI (248 aa)) form the Protein kinase 2 domain. Residues 431 to 440 (LGEGSFSICR) and K454 each bind ATP. D608 (proton acceptor) is an active-site residue. A Phosphothreonine; by MAPK1, MAPK3 and MAPK14 modification is found at T645. A phosphoserine mark is found at S711, S721, S755, and S759. Position 764 is a phosphothreonine (T764). The tract at residues 805–863 (AKRRKMKRTSTSTETRSSSSESSRSSSSQSHGKTTPTKTLQPSNPTEGSNPDTLFQFSD) is disordered. The segment covering 813–832 (TSTSTETRSSSSESSRSSSS) has biased composition (low complexity). Phosphoserine; by autocatalysis occurs at positions 814, 816, and 822. Polar residues predominate over residues 833–863 (QSHGKTTPTKTLQPSNPTEGSNPDTLFQFSD). S862 is subject to Phosphoserine.

The protein belongs to the protein kinase superfamily. AGC Ser/Thr protein kinase family. S6 kinase subfamily. As to quaternary structure, forms a complex with either MAPK1/ERK2 or MAPK3/ERK1 in quiescent cells which transiently dissociates following mitogenic stimulation. Also associates with MAPK14/p38-alpha. Activated RPS6KA5 associates with and phosphorylates the NF-kappa-B p65 subunit RELA. Interacts with CREBBP and EP300. Mg(2+) serves as cofactor. In terms of processing, ser-375 and Thr-645 phosphorylation is required for kinase activity. Ser-375 and Ser-211 are autophosphorylated by the C-terminal kinase domain, and their phosphorylation is essential for the catalytic activity of the N-terminal kinase domain. Phosphorylated at Ser-359, Thr-645 and Thr-764 by MAPK1/ERK2, MAPK3/ERK1 and MAPK14/p38-alpha. Autophosphorylated at Ser-814, Ser-816 and Ser-822 by the N-terminal kinase domain. Post-translationally, ubiquitinated.

It is found in the nucleus. It carries out the reaction L-seryl-[protein] + ATP = O-phospho-L-seryl-[protein] + ADP + H(+). It catalyses the reaction L-threonyl-[protein] + ATP = O-phospho-L-threonyl-[protein] + ADP + H(+). Its activity is regulated as follows. Activated by phosphorylation at Ser-359, Thr-645 and Thr-764 by MAPK1/ERK2, MAPK3/ERK1 and MAPK14/p38-alpha, and by further autophosphorylation of Ser-211, Ser-375 and Ser-380 by the activated C-terminal kinase domain. The active N-terminal kinase domain finally phosphorylates downstream substrates, as well as Ser-814, Ser-816 and Ser-822 in its own C-terminal region. Its function is as follows. Serine/threonine-protein kinase that is required for the mitogen or stress-induced phosphorylation of the transcription factors CREB1 and ATF1 and for the regulation of the transcription factors RELA, STAT3 and ETV1/ER81, and that contributes to gene activation by histone phosphorylation and functions in the regulation of inflammatory genes. Phosphorylates CREB1 and ATF1 in response to mitogenic or stress stimuli such as UV-C irradiation, epidermal growth factor (EGF) and anisomycin. Plays an essential role in the control of RELA transcriptional activity in response to TNF and upon glucocorticoid, associates in the cytoplasm with the glucocorticoid receptor NR3C1 and contributes to RELA inhibition and repression of inflammatory gene expression. In skeletal myoblasts is required for phosphorylation of RELA at 'Ser-276' during oxidative stress. In erythropoietin-stimulated cells, is necessary for the 'Ser-727' phosphorylation of STAT3 and regulation of its transcriptional potential. Phosphorylates ETV1/ER81 at 'Ser-191' and 'Ser-216', and thereby regulates its ability to stimulate transcription, which may be important during development and breast tumor formation. Directly represses transcription via phosphorylation of 'Ser-1' of histone H2A. Phosphorylates 'Ser-10' of histone H3 in response to mitogenics, stress stimuli and EGF, which results in the transcriptional activation of several immediate early genes, including proto-oncogenes c-fos/FOS and c-jun/JUN. May also phosphorylate 'Ser-28' of histone H3. Mediates the mitogen- and stress-induced phosphorylation of high mobility group protein 1 (HMGN1/HMG14). In lipopolysaccharide-stimulated primary macrophages, acts downstream of the Toll-like receptor TLR4 to limit the production of pro-inflammatory cytokines. Functions probably by inducing transcription of the MAP kinase phosphatase DUSP1 and the anti-inflammatory cytokine interleukin 10 (IL10), via CREB1 and ATF1 transcription factors. Plays a role in neuronal cell death by mediating the downstream effects of excitotoxic injury. Phosphorylates TRIM7 at 'Ser-106' in response to growth factor signaling via the MEK/ERK pathway, thereby stimulating its ubiquitin ligase activity. This is Ribosomal protein S6 kinase alpha-5 (Rps6ka5) from Mus musculus (Mouse).